The chain runs to 221 residues: Dynein light chain Tctex-type 4 (221 aa).

Disordered regions lie at residues 1-52 and 65-87; these read MASR…SRRG and NSLVGPGAGPGGQRPSLGPVPPL. A compositionally biased stretch (basic and acidic residues) spans 10–21; the sequence is RQEEENAKDSGR. S66 bears the Phosphoserine mark.

The protein belongs to the dynein light chain Tctex-type family. Interacts with ENG/endoglin, TGFBR2 and TGFBR3. Interacts with PPP1CC. In terms of tissue distribution, ubiquitously expressed. Expressed in testis (at protein level).

The protein localises to the cell projection. It localises to the cilium. Its subcellular location is the flagellum. It is found in the cytoplasmic vesicle. The protein resides in the secretory vesicle. The protein localises to the acrosome. It localises to the cytoplasm. Its subcellular location is the cytoskeleton. It is found in the cilium axoneme. The protein resides in the nucleus. The protein localises to the microtubule organizing center. The polypeptide is Dynein light chain Tctex-type 4 (Homo sapiens (Human)).